The primary structure comprises 533 residues: Flavin-containing monooxygenase 5 (533 aa).

R5 carries the post-translational modification Dimethylated arginine. FAD contacts are provided by residues 10–14 (GSGAS), E33, and 41–42 (LW). A Phosphoserine modification is found at S54. Phosphotyrosine is present on Y56. Residue S58 is modified to Phosphoserine. 62 to 63 (NT) serves as a coordination point for FAD. 196 to 199 (SGGD) contributes to the NADP(+) binding site. Residue T284 is modified to Phosphothreonine. S401 bears the Phosphoserine mark. The chain crosses the membrane as a helical span at residues 513–533 (LVTVRVLMLAVTFLAVILAYF).

It belongs to the FMO family. FAD serves as cofactor.

Its subcellular location is the microsome membrane. It is found in the endoplasmic reticulum membrane. The enzyme catalyses N,N-dimethylaniline + NADPH + O2 + H(+) = N,N-dimethylaniline N-oxide + NADP(+) + H2O. It catalyses the reaction NADPH + O2 + H(+) = H2O2 + NADP(+). It carries out the reaction heptan-2-one + NADPH + O2 + H(+) = pentyl acetate + NADP(+) + H2O. The catalysed reaction is octan-3-one + NADPH + O2 + H(+) = pentyl propanoate + NADP(+) + H2O. The enzyme catalyses octan-3-one + NADPH + O2 + H(+) = ethyl hexanoate + NADP(+) + H2O. It catalyses the reaction hexan-3-one + NADPH + O2 + H(+) = ethyl butanoate + NADP(+) + H2O. It carries out the reaction hexan-3-one + NADPH + O2 + H(+) = propyl propanoate + NADP(+) + H2O. The catalysed reaction is heptan-4-one + NADPH + O2 + H(+) = propyl butanoate + NADP(+) + H2O. The enzyme catalyses (2E)-geranial + NADPH + O2 + H(+) = (1E)-2,6-dimethylhepta-1,5-dien-1-yl formate + NADP(+) + H2O. It catalyses the reaction sulcatone + NADPH + O2 + H(+) = 4-methylpent-3-en-1-yl acetate + NADP(+) + H2O. In terms of biological role, acts as a Baeyer-Villiger monooxygenase on a broad range of substrates. Catalyzes the insertion of an oxygen atom into a carbon-carbon bond adjacent to a carbonyl, which converts ketones to esters. Active on diverse carbonyl compounds, whereas soft nucleophiles are mostly non- or poorly reactive. In contrast with other forms of FMO it is non- or poorly active on 'classical' substrates such as drugs, pesticides, and dietary components containing soft nucleophilic heteroatoms. Able to oxidize drug molecules bearing a carbonyl group on an aliphatic chain, such as nabumetone and pentoxifylline. Also, in the absence of substrates, shows slow but yet significant NADPH oxidase activity. Acts as a positive modulator of cholesterol biosynthesis as well as glucose homeostasis, promoting metabolic aging via pleiotropic effects. The protein is Flavin-containing monooxygenase 5 of Rattus norvegicus (Rat).